We begin with the raw amino-acid sequence, 343 residues long: Uroporphyrinogen decarboxylase (343 aa).

Residues 25 to 29 (RQAGR), aspartate 75, tyrosine 152, serine 207, and histidine 323 each bind substrate.

This sequence belongs to the uroporphyrinogen decarboxylase family. As to quaternary structure, homodimer.

Its subcellular location is the cytoplasm. It catalyses the reaction uroporphyrinogen III + 4 H(+) = coproporphyrinogen III + 4 CO2. Its pathway is porphyrin-containing compound metabolism; protoporphyrin-IX biosynthesis; coproporphyrinogen-III from 5-aminolevulinate: step 4/4. Its function is as follows. Catalyzes the decarboxylation of four acetate groups of uroporphyrinogen-III to yield coproporphyrinogen-III. In Jannaschia sp. (strain CCS1), this protein is Uroporphyrinogen decarboxylase.